Consider the following 335-residue polypeptide: Foldase protein PrsA (335 aa).

A signal peptide spans 1 to 22; sequence MRSAKKLLSVLCLGVFILTFTA. Cysteine 23 is lipidated: N-palmitoyl cysteine. Residue cysteine 23 is the site of S-diacylglycerol cysteine attachment. Residues 194-285 enclose the PpiC domain; sequence PNTMNVSHIL…FGYHIIKINS (92 aa).

The protein belongs to the PrsA family.

It is found in the cell membrane. The enzyme catalyses [protein]-peptidylproline (omega=180) = [protein]-peptidylproline (omega=0). Plays a major role in protein secretion by helping the post-translocational extracellular folding of several secreted proteins. The polypeptide is Foldase protein PrsA (Clostridium botulinum (strain Loch Maree / Type A3)).